The chain runs to 309 residues: Serine/threonine-protein phosphatase 2A catalytic subunit alpha isoform (309 aa).

Residues Asp-57, His-59, Asp-85, and Asn-117 each contribute to the Mn(2+) site. Zn(2+) contacts are provided by Asp-57, His-59, and Asp-85. Residues Asp-85 and Asn-117 each coordinate Fe(3+). His-118 (proton donor) is an active-site residue. His-167 and His-241 together coordinate Mn(2+). 2 residues coordinate Fe(3+): His-167 and His-241. Tyr-307 is modified (phosphotyrosine). Leu-309 bears the Leucine methyl ester mark.

The protein belongs to the PPP phosphatase family. PP-1 subfamily. PP2A consists of a common heterodimeric core enzyme composed of PPP2CA, a 36 kDa catalytic subunit (subunit C), and PPP2R1A, a 65 kDa constant regulatory subunit (PR65 or subunit A), that associates with a variety of regulatory subunits. Proteins that associate with the core dimer include three families of regulatory subunits B (the R2/B/PR55/B55, R3/B''/PR72/PR130/PR59 and R5/B'/B56 families), the 48 kDa variable regulatory subunit, viral proteins, and cell signaling molecules. Interacts with the PP2A A subunit PPP2R1A. Interacts with the regulatory subunit PPP2R2A. Interacts (via C-terminus) with PTPA. Interacts with NXN; the interaction is direct. Interacts with KCTD20. Interacts with BTBD10. Interacts with SGO1 and SGO2. Interacts with RAF1. Interaction with IGBP1 protects unassembled PPP2CA from degradative ubiquitination. Interacts with GSK3B (via C2 domain). Interacts with MFHAS1; retains PPP2CA into the cytoplasm and excludes it from the nucleus. Interacts with PABIR1/FAM122A. Interacts with ADCY8; interaction is phosphatase activity-dependent; antagonizes interaction between ADCY8 and calmodulin. Interacts with CRTC3 (when phosphorylated at 'Ser-391'). Interacts with SPRY2; the interaction is inhibited by TESK1 interaction with SPRY2, possibly by vesicular sequestration of SPRY2. Interacts with TRAF3IP3. Interacts with AMBRA1 (via PxP motifs); enhancing interaction between PPP2CA and MYC or FOXO3. Forms a complex with AMBRA1 and BECN1; AMBRA1 and BECN1 components of the complex regulate MYC stability via different pathways. Part of the core of STRIPAK complexes composed of PP2A catalytic and scaffolding subunits, the striatins (PP2A regulatory subunits), the striatin-associated proteins MOB4, STRIP1 and STRIP2, PDCD10 and members of the STE20 kinases, such as STK24 and STK26. Phosphatase component of the Integrator-PP2A (INTAC) complex, composed of the Integrator core complex and protein phosphatase 2A subunits PPP2CA and PPP2R1A. Mn(2+) is required as a cofactor. The cofactor is Fe(3+). Zn(2+) serves as cofactor. In terms of processing, reversibly methyl esterified on Leu-309 by leucine carboxyl methyltransferase 1 (LCMT1) and protein phosphatase methylesterase 1 (PPME1). Carboxyl methylation influences the affinity of the catalytic subunit for the different regulatory subunits, thereby modulating the PP2A holoenzyme's substrate specificity, enzyme activity and cellular localization. Phosphorylation of either threonine (by autophosphorylation-activated protein kinase) or tyrosine results in inactivation of the phosphatase. Auto-dephosphorylation has been suggested as a mechanism for reactivation. Post-translationally, polyubiquitinated, leading to its degradation by the proteasome.

The protein resides in the cytoplasm. It is found in the nucleus. Its subcellular location is the chromosome. The protein localises to the centromere. It localises to the cytoskeleton. The protein resides in the spindle pole. The enzyme catalyses O-phospho-L-seryl-[protein] + H2O = L-seryl-[protein] + phosphate. It catalyses the reaction O-phospho-L-threonyl-[protein] + H2O = L-threonyl-[protein] + phosphate. With respect to regulation, inhibited by the interaction between PPP2R2A and ARPP19; this inhibition is enhanced when ARPP19 is phosphorylated. Inhibited by the interaction between PPP2R2A and PABIR1/FAM122A. In terms of biological role, catalytic subunit of protein phosphatase 2A (PP2A), a serine/threonine phosphatase involved in the regulation of a wide variety of enzymes, signal transduction pathways, and cellular events. PP2A is the major phosphatase for microtubule-associated proteins (MAPs). PP2A can modulate the activity of phosphorylase B kinase casein kinase 2, mitogen-stimulated S6 kinase, and MAP-2 kinase. Cooperates with SGO2 to protect centromeric cohesin from separase-mediated cleavage in oocytes specifically during meiosis I. Can dephosphorylate various proteins, such as SV40 large T antigen, AXIN1, p53/TP53, PIM3, WEE1. Activates RAF1 by dephosphorylating it at 'Ser-259'. Mediates dephosphorylation of WEE1, preventing its ubiquitin-mediated proteolysis, increasing WEE1 protein levels, and promoting the G2/M checkpoint. Mediates dephosphorylation of MYC; promoting its ubiquitin-mediated proteolysis: interaction with AMBRA1 enhances interaction between PPP2CA and MYC. Mediates dephosphorylation of FOXO3; promoting its stabilization: interaction with AMBRA1 enhances interaction between PPP2CA and FOXO3. Catalyzes dephosphorylation of the pyrin domain of NLRP3, promoting assembly of the NLRP3 inflammasome. Together with RACK1 adapter, mediates dephosphorylation of AKT1 at 'Ser-473', preventing AKT1 activation and AKT-mTOR signaling pathway. Dephosphorylation of AKT1 is essential for regulatory T-cells (Treg) homeostasis and stability. Catalyzes dephosphorylation of PIM3, promotinh PIM3 ubiquitination and proteasomal degradation. Part of the striatin-interacting phosphatase and kinase (STRIPAK) complexes. STRIPAK complexes have critical roles in protein (de)phosphorylation and are regulators of multiple signaling pathways including Hippo, MAPK, nuclear receptor and cytoskeleton remodeling. Different types of STRIPAK complexes are involved in a variety of biological processes such as cell growth, differentiation, apoptosis, metabolism and immune regulation. Key mediator of a quality checkpoint during transcription elongation as part of the Integrator-PP2A (INTAC) complex. The INTAC complex drives premature transcription termination of transcripts that are unfavorably configured for transcriptional elongation: within the INTAC complex, PPP2CA catalyzes dephosphorylation of the C-terminal domain (CTD) of Pol II subunit POLR2A/RPB1 and SUPT5H/SPT5, thereby preventing transcriptional elongation. The polypeptide is Serine/threonine-protein phosphatase 2A catalytic subunit alpha isoform (PPP2CA) (Homo sapiens (Human)).